The sequence spans 611 residues: Rho GTPase-activating protein gacN (611 aa).

Residues 24–219 (KTFKKILKPG…VLIEEFHVLY (196 aa)) form the Rho-GAP domain. Residues 236 to 499 (IREDKRSTSE…TKLQKSSSSS (264 aa)) adopt a coiled-coil conformation. Residues 476-491 (NQLEKEKSKLQDELTK) show a composition bias toward basic and acidic residues. Residues 476–550 (NQLEKEKSKL…TTPPPPLDED (75 aa)) form a disordered region. Low complexity-rich tracts occupy residues 495 to 509 (SSSS…SSSS) and 527 to 540 (TTTT…AQQP).

The protein localises to the cytoplasm. Rho GTPase-activating protein involved in the signal transduction pathway. The chain is Rho GTPase-activating protein gacN (gacN) from Dictyostelium discoideum (Social amoeba).